Reading from the N-terminus, the 461-residue chain is MSEFTPREIVSELDRYIIGQNMAKRAVAIALRNRWRRQRLSAEMREEVYPKNILMIGPTGVGKTEIARRLAKLARAPFIKVEATKFTEVGYVGRDVESIVRDLVEMGITMVTEEAKVKVQFQAEDQAEERLLDILLPLPSTGQGEGSAHFGLFGQMEGSSVKPEPTAQQKESRQKMRKMLREGKLDDREIDIDLKEQRRVPMMEVITPQGMEGINLQDMLGGLMGGRTKTRRVKVGEAMKLLTEEEAGKLVDQDTVQQVAIERVEQSGIVFLDELDKVCARGSETRGGDVSREGVQRDLLPLVEGTTVSTKYGMVKSDHILFIASGAFQLAKPSDLLPELQGRLPIRVELESLGKGEFVRILTEPENALTRQYAALMGVENIELVFTDEGIEALAEIATRVNETAENIGARRLHTVMEKLLDELSFSAPDRGGERVVIDAAYVNRQLSDLAADEDLSRFIL.

ATP contacts are provided by residues Ile18 and 60 to 65 (GVGKTE). The interval 157–178 (EGSSVKPEPTAQQKESRQKMRK) is disordered. Residues Asp273, Glu339, and Arg411 each contribute to the ATP site.

Belongs to the ClpX chaperone family. HslU subfamily. A double ring-shaped homohexamer of HslV is capped on each side by a ring-shaped HslU homohexamer. The assembly of the HslU/HslV complex is dependent on binding of ATP.

The protein localises to the cytoplasm. Its function is as follows. ATPase subunit of a proteasome-like degradation complex; this subunit has chaperone activity. The binding of ATP and its subsequent hydrolysis by HslU are essential for unfolding of protein substrates subsequently hydrolyzed by HslV. HslU recognizes the N-terminal part of its protein substrates and unfolds these before they are guided to HslV for hydrolysis. The sequence is that of ATP-dependent protease ATPase subunit HslU from Magnetococcus marinus (strain ATCC BAA-1437 / JCM 17883 / MC-1).